A 314-amino-acid chain; its full sequence is Protein phosphatase PTC7 homolog fig (314 aa).

Residues 43–309 form the PPM-type phosphatase domain; the sequence is PYLVTVVQGR…DDITLILSSV (267 aa). Mn(2+)-binding residues include Asp87, Gly88, and Asp232.

The protein belongs to the PP2C family. Requires Mg(2+) as cofactor. Mn(2+) is required as a cofactor.

The catalysed reaction is O-phospho-L-seryl-[protein] + H2O = L-seryl-[protein] + phosphate. It carries out the reaction O-phospho-L-threonyl-[protein] + H2O = L-threonyl-[protein] + phosphate. This Drosophila sechellia (Fruit fly) protein is Protein phosphatase PTC7 homolog fig.